The sequence spans 434 residues: MALVSETGVDVSTDGITVVLGSQWGDEGKGKLVDILCDNVDICARCAGGNNAGHTIVANGQTYDFHILPSGLVNPKSVNLIGSGVVVYLPAFFHELENLVKKGLDCTNRIFISDRAQLVFDYHQRADALNEAELGGKSIGTTGKGIGPAYSTKATRSGIRVHHLYNWPEFESRYRKNVRDLQKRYGAFEYDVEGELVRYKELAAKLQPYVVDSIAFIHTGLKEKKRILVEGANALMLDLDFGTYPYVTSSNTTIGGVCTGLGVPPRAIANVIGVVKAYTTRVGAGPFPTEQLNEIGDHLQKVGREFGVTTGRKRRCGWLDLVVLKYSTLINGYDSLNLTKLDILDDFKEIKVAVAYIVDGKRIETFPADLDSLESAEIIYETFPGWQTKTTGITRWEDMPENAKKYIEFIEKFLGVPIKYIGVGPGRDEVLVKH.

GTP-binding positions include 25 to 31 and 53 to 55; these read GDEGKGK and GHT. Residue Asp26 is the Proton acceptor of the active site. 2 residues coordinate Mg(2+): Asp26 and Gly53. IMP-binding positions include 26 to 29, 51 to 54, Thr142, Arg156, Asn233, Thr248, and Arg312; these read DEGK and NAGH. His54 (proton donor) is an active-site residue. Position 308 to 314 (308 to 314) interacts with substrate; it reads VTTGRKR. GTP contacts are provided by residues Arg314, 340-342, and 422-424; these read KLD and GVG.

This sequence belongs to the adenylosuccinate synthetase family. As to quaternary structure, homodimer. Mg(2+) is required as a cofactor.

The protein localises to the cytoplasm. It catalyses the reaction IMP + L-aspartate + GTP = N(6)-(1,2-dicarboxyethyl)-AMP + GDP + phosphate + 2 H(+). It functions in the pathway purine metabolism; AMP biosynthesis via de novo pathway; AMP from IMP: step 1/2. Plays an important role in the de novo pathway and in the salvage pathway of purine nucleotide biosynthesis. Catalyzes the first committed step in the biosynthesis of AMP from IMP. This Schizosaccharomyces japonicus (strain yFS275 / FY16936) (Fission yeast) protein is Adenylosuccinate synthetase.